Reading from the N-terminus, the 507-residue chain is Desmethyl-deoxy-podophyllotoxin synthase (507 aa).

A helical transmembrane segment spans residues 1–21 (MEFLSFPLSSALLIILLFMLV). Cysteine 440 contributes to the heme binding site.

The protein belongs to the cytochrome P450 family. The cofactor is heme. In terms of tissue distribution, rhizome-specific expression.

The protein resides in the membrane. The enzyme catalyses (-)-deoxypodophyllotoxin + reduced [NADPH--hemoprotein reductase] + O2 = (-)-4'-desmethyl-deoxypodophyllotoxin + formaldehyde + oxidized [NADPH--hemoprotein reductase] + H2O + H(+). The protein operates within aromatic compound metabolism; phenylpropanoid biosynthesis. Its function is as follows. Cytochrome P450 involved in the biosynthesis of etoposide, a chemotherapeutic compound of the topoisomerase inhibitor family. Catalyzes the conversion of deoxypodophyllotoxin to desmethyl-deoxypodophyllotoxin. This is Desmethyl-deoxy-podophyllotoxin synthase from Sinopodophyllum hexandrum (Himalayan may apple).